We begin with the raw amino-acid sequence, 426 residues long: Serine--tRNA ligase (426 aa).

233–235 (TAE) provides a ligand contact to L-serine. 264 to 266 (RSE) contributes to the ATP binding site. Glutamate 287 contributes to the L-serine binding site. 351-354 (EISS) provides a ligand contact to ATP. Serine 387 is an L-serine binding site.

Belongs to the class-II aminoacyl-tRNA synthetase family. Type-1 seryl-tRNA synthetase subfamily. In terms of assembly, homodimer. The tRNA molecule binds across the dimer.

The protein localises to the cytoplasm. It catalyses the reaction tRNA(Ser) + L-serine + ATP = L-seryl-tRNA(Ser) + AMP + diphosphate + H(+). It carries out the reaction tRNA(Sec) + L-serine + ATP = L-seryl-tRNA(Sec) + AMP + diphosphate + H(+). It functions in the pathway aminoacyl-tRNA biosynthesis; selenocysteinyl-tRNA(Sec) biosynthesis; L-seryl-tRNA(Sec) from L-serine and tRNA(Sec): step 1/1. Catalyzes the attachment of serine to tRNA(Ser). Is also able to aminoacylate tRNA(Sec) with serine, to form the misacylated tRNA L-seryl-tRNA(Sec), which will be further converted into selenocysteinyl-tRNA(Sec). The chain is Serine--tRNA ligase from Pseudomonas putida (strain ATCC 47054 / DSM 6125 / CFBP 8728 / NCIMB 11950 / KT2440).